The primary structure comprises 171 residues: 3-hydroxydecanoyl-[acyl-carrier-protein] dehydratase (171 aa).

The active site involves H71.

This sequence belongs to the thioester dehydratase family. FabA subfamily. As to quaternary structure, homodimer.

It is found in the cytoplasm. It carries out the reaction a (3R)-hydroxyacyl-[ACP] = a (2E)-enoyl-[ACP] + H2O. The catalysed reaction is (3R)-hydroxydecanoyl-[ACP] = (2E)-decenoyl-[ACP] + H2O. It catalyses the reaction (2E)-decenoyl-[ACP] = (3Z)-decenoyl-[ACP]. It functions in the pathway lipid metabolism; fatty acid biosynthesis. Necessary for the introduction of cis unsaturation into fatty acids. Catalyzes the dehydration of (3R)-3-hydroxydecanoyl-ACP to E-(2)-decenoyl-ACP and then its isomerization to Z-(3)-decenoyl-ACP. Can catalyze the dehydratase reaction for beta-hydroxyacyl-ACPs with saturated chain lengths up to 16:0, being most active on intermediate chain length. The sequence is that of 3-hydroxydecanoyl-[acyl-carrier-protein] dehydratase from Agrobacterium fabrum (strain C58 / ATCC 33970) (Agrobacterium tumefaciens (strain C58)).